The sequence spans 153 residues: Cytochrome c-554 (153 aa).

The first 20 residues, Met1–Ala20, serve as a signal peptide directing secretion. Gln21 is subject to Pyrrolidone carboxylic acid. Positions 37, 142, 145, and 146 each coordinate heme c.

Post-translationally, binds 1 heme c group covalently per subunit.

It is found in the periplasm. Its function is as follows. Monoheme c-type cytochrome, that is particularly expressed when cells generate energy via aerobic respiration. The protein is Cytochrome c-554 (cycF) of Cereibacter sphaeroides (strain ATCC 17023 / DSM 158 / JCM 6121 / CCUG 31486 / LMG 2827 / NBRC 12203 / NCIMB 8253 / ATH 2.4.1.) (Rhodobacter sphaeroides).